Reading from the N-terminus, the 321-residue chain is Lipoyl synthase (321 aa).

Residues C68, C73, C79, C94, C98, C101, and S308 each coordinate [4Fe-4S] cluster. The Radical SAM core domain maps to 80–297 (FNHGTATFMI…KAEALAMGFT (218 aa)).

Belongs to the radical SAM superfamily. Lipoyl synthase family. [4Fe-4S] cluster serves as cofactor.

It localises to the cytoplasm. It carries out the reaction [[Fe-S] cluster scaffold protein carrying a second [4Fe-4S](2+) cluster] + N(6)-octanoyl-L-lysyl-[protein] + 2 oxidized [2Fe-2S]-[ferredoxin] + 2 S-adenosyl-L-methionine + 4 H(+) = [[Fe-S] cluster scaffold protein] + N(6)-[(R)-dihydrolipoyl]-L-lysyl-[protein] + 4 Fe(3+) + 2 hydrogen sulfide + 2 5'-deoxyadenosine + 2 L-methionine + 2 reduced [2Fe-2S]-[ferredoxin]. It functions in the pathway protein modification; protein lipoylation via endogenous pathway; protein N(6)-(lipoyl)lysine from octanoyl-[acyl-carrier-protein]: step 2/2. Functionally, catalyzes the radical-mediated insertion of two sulfur atoms into the C-6 and C-8 positions of the octanoyl moiety bound to the lipoyl domains of lipoate-dependent enzymes, thereby converting the octanoylated domains into lipoylated derivatives. The protein is Lipoyl synthase of Edwardsiella ictaluri (strain 93-146).